Here is a 256-residue protein sequence, read N- to C-terminus: Alcohol dehydrogenase (256 aa).

Residue 12–35 (FVAGLGGIGLDTSKELVKRDLKNL) participates in NAD(+) binding. Ser140 serves as a coordination point for substrate. Tyr153 functions as the Proton acceptor in the catalytic mechanism.

Belongs to the short-chain dehydrogenases/reductases (SDR) family. In terms of assembly, homodimer.

The enzyme catalyses a primary alcohol + NAD(+) = an aldehyde + NADH + H(+). It catalyses the reaction a secondary alcohol + NAD(+) = a ketone + NADH + H(+). The protein is Alcohol dehydrogenase (Adh) of Drosophila teissieri (Fruit fly).